A 283-amino-acid polypeptide reads, in one-letter code: Diphthine methyl ester synthase (283 aa).

S-adenosyl-L-methionine is bound by residues Leu-9, Asp-84, Gly-87, 112–113, Leu-163, Met-221, and His-246; that span reads SI.

Belongs to the diphthine synthase family.

The protein resides in the cytoplasm. The enzyme catalyses 2-[(3S)-amino-3-carboxypropyl]-L-histidyl-[translation elongation factor 2] + 4 S-adenosyl-L-methionine = diphthine methyl ester-[translation elongation factor 2] + 4 S-adenosyl-L-homocysteine + 3 H(+). It functions in the pathway protein modification; peptidyl-diphthamide biosynthesis. Its function is as follows. S-adenosyl-L-methionine-dependent methyltransferase that catalyzes four methylations of the modified target histidine residue in translation elongation factor 2 (EF-2), to form an intermediate called diphthine methyl ester. The four successive methylation reactions represent the second step of diphthamide biosynthesis. In Schizosaccharomyces pombe (strain 972 / ATCC 24843) (Fission yeast), this protein is Diphthine methyl ester synthase (dph5).